The following is a 216-amino-acid chain: LexA repressor (216 aa).

The H-T-H motif DNA-binding region spans 28–48 (RAEIAAELGFSSANSAEEHLR). Catalysis depends on for autocatalytic cleavage activity residues Ser-134 and Lys-171.

Belongs to the peptidase S24 family. Homodimer.

It carries out the reaction Hydrolysis of Ala-|-Gly bond in repressor LexA.. Functionally, represses a number of genes involved in the response to DNA damage (SOS response), including recA and lexA. In the presence of single-stranded DNA, RecA interacts with LexA causing an autocatalytic cleavage which disrupts the DNA-binding part of LexA, leading to derepression of the SOS regulon and eventually DNA repair. The polypeptide is LexA repressor (Paraburkholderia xenovorans (strain LB400)).